Consider the following 399-residue polypeptide: Unsaturated chondroitin disaccharide hydrolase (399 aa).

D116 serves as the catalytic Nucleophile. The substrate site is built by D116, D176, G234, T236, R248, W252, S366, and S369. Catalysis depends on D176, which acts as the Proton donor.

The protein belongs to the glycosyl hydrolase 88 family. In terms of assembly, monomer.

The enzyme catalyses beta-D-4-deoxy-Delta(4)-GlcpA-(1-&gt;3)-beta-D-GalpNAc6S + H2O = N-acetyl-beta-D-galactosamine 6-sulfate + 5-dehydro-4-deoxy-D-glucuronate. Its function is as follows. Catalyzes the hydrolysis of unsaturated hyaluronate and chondroitin disaccharides. Also degrades unsaturated heparin disaccharides. Releases 4-deoxy-4,5-didehydro D-glucuronic acid or 4-deoxy-4,5-didehydro L-iduronic acid from chondroitin disaccharides, hyaluronan disaccharides and heparin disaccharides and cleaves both glycosidic (1-&gt;3) and (1-&gt;4) bonds. Prefers sulfated glycosaminoglycans compared to unsulfated glycosaminoglycans. Probably required for mammalian cells invasion through the degradation of extracellular sulfated glycosaminoglycans such as chondroitin and hyaluronan. The chain is Unsaturated chondroitin disaccharide hydrolase (ugl) from Streptococcus pyogenes serotype M1.